The chain runs to 201 residues: Pro-P-factor (201 aa).

The first 20 residues, 1–20 (MKITAVIALLFSLAAASPIP), serve as a signal peptide directing secretion. 5 propeptides span residues 21-31 (VADPGVVSVSK), 58-65 (EFEAAPAK), 92-99 (EFEAAPEK), 126-133 (EFEAAPAK), and 160-201 (TEED…KFES). N-linked (GlcNAc...) asparagine glycosylation is found at Asn187 and Asn194.

Proteolytically cleaved by kpr, probably at the C-terminal side of dibasic Lys-Arg residues. Post-translationally, glycosylated. Most of the precursor molecules are glycosylated on at least one site, but only a small proportion are glycosylated on both sites.

The protein resides in the secreted. Its function is as follows. In h- cells under nutritional starvation, P-factor induces alteration of cell morphology toward mating, arrest of the cell cycle at the G1 phase prior to the initiation of DNA synthesis and indirect transcriptional activation of the sxa2 gene which down-regulates the signaling pathway. The protein is Pro-P-factor (map2) of Schizosaccharomyces pombe (strain 972 / ATCC 24843) (Fission yeast).